A 217-amino-acid chain; its full sequence is Translation initiation factor IF-3 (217 aa).

Positions lysine 170–alanine 217 are disordered. A compositionally biased stretch (basic and acidic residues) spans threonine 172–alanine 189.

It belongs to the IF-3 family. In terms of assembly, monomer.

The protein resides in the cytoplasm. IF-3 binds to the 30S ribosomal subunit and shifts the equilibrium between 70S ribosomes and their 50S and 30S subunits in favor of the free subunits, thus enhancing the availability of 30S subunits on which protein synthesis initiation begins. This is Translation initiation factor IF-3 from Streptomyces coelicolor (strain ATCC BAA-471 / A3(2) / M145).